We begin with the raw amino-acid sequence, 1976 residues long: Myosin-10 (1976 aa).

Position 18 is an omega-N-methylarginine (Arg18). The region spanning 31–81 (TAKKLVWIPSERHGFEAASIKEERGDEVLVELAENGKKAMVNKDDIQKMNP) is the Myosin N-terminal SH3-like domain. In terms of domain architecture, Myosin motor spans 85–783 (SKVEDMAELT…VLAHLEEERD (699 aa)). ATP is bound at residue 178–185 (GESGAGKT). An N6-acetyllysine modification is found at Lys442. An actin-binding region spans residues 661–683 (LTKLMATLRNTNPNFVRCIIPNH). An IQ domain is found at 786-815 (ITDIIIFFQAVCRGYLARKAFAKKQQQLSA). A coiled-coil region spans residues 845–1976 (LQVTRQEEEL…INETQPPQSE (1132 aa)). The interval 1126 to 1149 (DFESEKASRNKAEKQKRDLSEELE) is disordered. Over residues 1129–1149 (SEKASRNKAEKQKRDLSEELE) the composition is skewed to basic and acidic residues. Ser1145 is modified (phosphoserine). 3 positions are modified to N6-acetyllysine: Lys1241, Lys1301, and Lys1645. Disordered stretches follow at residues 1697–1718 (ASSERARRHAEQERDELADEIA) and 1874–1976 (KANA…PQSE). The segment covering 1698 to 1708 (SSERARRHAEQ) has biased composition (basic and acidic residues). An Omega-N-methylarginine modification is found at Arg1930. 4 positions are modified to phosphoserine: Ser1935, Ser1937, Ser1938, and Ser1939. At Arg1940 the chain carries Omega-N-methylarginine. Residues Ser1952 and Ser1956 each carry the phosphoserine modification. Phosphothreonine is present on Thr1960. Residues 1967–1976 (INETQPPQSE) are compositionally biased toward polar residues. Ser1975 bears the Phosphoserine mark.

The protein belongs to the TRAFAC class myosin-kinesin ATPase superfamily. Myosin family. In terms of assembly, myosin is a hexameric protein that consists of 2 heavy chain subunits (MHC), 2 alkali light chain subunits (MLC) and 2 regulatory light chain subunits (MLC-2). Interacts with PLEKHG6. Interacts with ECPAS. Interacts with KIF26B. Interacts with LARP6. Interacts with MCC. Interacts with CFAP95. In terms of processing, phosphorylated by ABL2.

It is found in the cell projection. The protein localises to the lamellipodium. Cellular myosin that appears to play a role in cytokinesis, cell shape, and specialized functions such as secretion and capping. Involved with LARP6 in the stabilization of type I collagen mRNAs for CO1A1 and CO1A2. During cell spreading, plays an important role in cytoskeleton reorganization, focal contacts formation (in the central part but not the margins of spreading cells), and lamellipodial extension; this function is mechanically antagonized by MYH9. This Bos taurus (Bovine) protein is Myosin-10 (MYH10).